The sequence spans 390 residues: Putative glutamate--cysteine ligase 2 (390 aa).

The protein belongs to the glutamate--cysteine ligase type 2 family. YbdK subfamily.

It catalyses the reaction L-cysteine + L-glutamate + ATP = gamma-L-glutamyl-L-cysteine + ADP + phosphate + H(+). Functionally, ATP-dependent carboxylate-amine ligase which exhibits weak glutamate--cysteine ligase activity. This is Putative glutamate--cysteine ligase 2 from Chloroflexus aggregans (strain MD-66 / DSM 9485).